We begin with the raw amino-acid sequence, 329 residues long: Mo25-like protein (329 aa).

This sequence belongs to the Mo25 family.

The polypeptide is Mo25-like protein (pmo25) (Schizosaccharomyces pombe (strain 972 / ATCC 24843) (Fission yeast)).